Here is a 532-residue protein sequence, read N- to C-terminus: uncharacterized protein (532 aa).

6 consecutive transmembrane segments (helical) span residues 7–26 (HSSYFSLFLIVALGFMLGRI), 30–52 (GLSLDVSAVIFIALLFGHFGVII), 59–77 (FGLVLFIFTIGIQAGPGFF), 87–109 (LIIITMLIISSACLTAVGLKYAF), 116–134 (VVGLVAGALTSTPGLAVAI), and 139–161 (SPLASIAYGIAYPFGVIGVILFV). RCK C-terminal domains are found at residues 179-262 (LEIE…LVGE) and 263-346 (REEG…LLGN). The next 4 membrane-spanning stretches (helical) occupy residues 356–378 (FFPIAMGIVLGVLFGKLNISFPG), 388–410 (GGVLMVALLLSAIGKTGPILWSM), 446–468 (GLLLFGVGAAITLVPMLIAAFVG), and 509–531 (YATVYPIAMVFLILFIQVIATVV).

This sequence belongs to the AAE transporter (TC 2.A.81) family.

The protein resides in the cell membrane. This is an uncharacterized protein from Bacteroides fragilis (strain YCH46).